A 243-amino-acid chain; its full sequence is Alanyl-tRNA editing protein AlaX-M (243 aa).

4 residues coordinate Zn(2+): His-105, His-109, Cys-208, and His-212.

The protein belongs to the class-II aminoacyl-tRNA synthetase family. Editing domain AlaX-M subfamily. Requires Zn(2+) as cofactor.

The protein localises to the cytoplasm. Its function is as follows. Functions in trans to edit the amino acid moiety from incorrectly charged Ser-tRNA(Ala) or Gly-tRNA(Ala). Has no activity on incorrectly charged Ser-tRNA(Thr), nor on correctly charged Ala-tRNA(Ala) or Ser-tRNA(Ser). The protein is Alanyl-tRNA editing protein AlaX-M (alaXM) of Methanosarcina barkeri (strain Fusaro / DSM 804).